The sequence spans 232 residues: 2,3,4,5-tetrahydropyridine-2,6-dicarboxylate N-acetyltransferase (232 aa).

Belongs to the transferase hexapeptide repeat family. DapH subfamily.

It catalyses the reaction (S)-2,3,4,5-tetrahydrodipicolinate + acetyl-CoA + H2O = L-2-acetamido-6-oxoheptanedioate + CoA. Its pathway is amino-acid biosynthesis; L-lysine biosynthesis via DAP pathway; LL-2,6-diaminopimelate from (S)-tetrahydrodipicolinate (acetylase route): step 1/3. Catalyzes the transfer of an acetyl group from acetyl-CoA to tetrahydrodipicolinate. The chain is 2,3,4,5-tetrahydropyridine-2,6-dicarboxylate N-acetyltransferase from Streptococcus pneumoniae serotype 4 (strain ATCC BAA-334 / TIGR4).